The primary structure comprises 154 residues: MGLSDGEWQLVLNVWGKVEADVGGHGQEVLIRLFTGHPETLEKFDKFKHLKTADEMKASEDLKKHGTTVLTALGGILKKKGQHEAELKPLAQSHATKHKIPIKYLEFISDAIVHVLHSKHPAEFGADAQAAMKKALELFRNDIAAKYKELGFQG.

The 147-residue stretch at 2–148 (GLSDGEWQLV…FRNDIAAKYK (147 aa)) folds into the Globin domain. Position 4 is a phosphoserine (Ser4). His65 contributes to the nitrite binding site. His65 provides a ligand contact to O2. Thr68 carries the post-translational modification Phosphothreonine. His94 provides a ligand contact to heme b.

It belongs to the globin family. As to quaternary structure, monomeric.

Its subcellular location is the cytoplasm. It localises to the sarcoplasm. The enzyme catalyses Fe(III)-heme b-[protein] + nitric oxide + H2O = Fe(II)-heme b-[protein] + nitrite + 2 H(+). It catalyses the reaction H2O2 + AH2 = A + 2 H2O. Monomeric heme protein which primary function is to store oxygen and facilitate its diffusion within muscle tissues. Reversibly binds oxygen through a pentacoordinated heme iron and enables its timely and efficient release as needed during periods of heightened demand. Depending on the oxidative conditions of tissues and cells, and in addition to its ability to bind oxygen, it also has a nitrite reductase activity whereby it regulates the production of bioactive nitric oxide. Under stress conditions, like hypoxia and anoxia, it also protects cells against reactive oxygen species thanks to its pseudoperoxidase activity. This chain is Myoglobin (MB), found in Lepilemur mustelinus (Weasel sportive lemur).